We begin with the raw amino-acid sequence, 932 residues long: uncharacterized protein (932 aa).

5 disordered regions span residues 26–120 (NINN…NMLT), 158–289 (MGIG…EEKK), 304–617 (NNNN…INHD), 635–720 (QQSQ…PPLV), and 802–863 (SVSS…FPLE). Composition is skewed to low complexity over residues 41–105 (NNNI…IISS) and 163–241 (NNNN…YGNN). Residues 242-253 (TPVNYIHNNSTP) show a composition bias toward polar residues. Acidic residues predominate over residues 265–285 (SDEEDSVLYSSDDSEESDYEE). Over residues 304–475 (NNNNINNNNM…NNNNNNNNNN (172 aa)) the composition is skewed to low complexity. Composition is skewed to polar residues over residues 476-492 (ENYV…NTES) and 527-540 (DIPN…TKQQ). Residues 548–590 (SPVYSPPNNLSPLSSPYLHHNSNNNSNNGGGNSNNNNTNFNYG) show a composition bias toward low complexity. Residues 606–617 (GERDPPHVINHD) show a composition bias toward basic and acidic residues. Low complexity-rich tracts occupy residues 635–666 (QQSQ…PSSS), 696–707 (SPPNTSISSLSS), and 813–853 (NSSN…NNNS). Basic and acidic residues predominate over residues 854–863 (EPKKPKFPLE).

This is an uncharacterized protein from Dictyostelium discoideum (Social amoeba).